Consider the following 360-residue polypeptide: MIIYATAVQTINSFVRLESLKEVYGLIWIFVPIFSLVLGIITGVLVIVWLEREISAGIQQRIGPEYAGPLGILQALADGTKLLFKENLRPSRGNPPLFSIGPSIAVISILLSYSVIPFSNHLVLADLNIGIFLWIAISSIAPIGLLMSGYGSNNKYSFLGGLRAAAQSISYEIPLTLCVLSISLLSNSLSTVDIVEAQSKYGFWGWNLWRQPIGFIIFLISSLAECERLPFDLPEAEEELIAGYQTEYSGIKFGLFYVASYLNLLISSLFVTVLYLGGWNISIPYISILELFQRDQIFGTTIGIFITLAKTYLFLFISIATRWTLPRLRMDQLLNLGWKFLLPISLGNLLLTTSFQLFSL.

The next 9 membrane-spanning stretches (helical) occupy residues 27–47, 98–118, 129–149, 165–185, 203–223, 248–268, 269–289, 297–317, and 340–360; these read IWIF…VLVI, FSIG…VIPF, IGIF…LMSG, AAQS…ISLL, FWGW…ISSL, YSGI…LISS, LFVT…ISIL, IFGT…FLFI, and FLLP…LFSL.

Belongs to the complex I subunit 1 family. In terms of assembly, NDH is composed of at least 16 different subunits, 5 of which are encoded in the nucleus.

The protein localises to the plastid. Its subcellular location is the chloroplast thylakoid membrane. The enzyme catalyses a plastoquinone + NADH + (n+1) H(+)(in) = a plastoquinol + NAD(+) + n H(+)(out). The catalysed reaction is a plastoquinone + NADPH + (n+1) H(+)(in) = a plastoquinol + NADP(+) + n H(+)(out). In terms of biological role, NDH shuttles electrons from NAD(P)H:plastoquinone, via FMN and iron-sulfur (Fe-S) centers, to quinones in the photosynthetic chain and possibly in a chloroplast respiratory chain. The immediate electron acceptor for the enzyme in this species is believed to be plastoquinone. Couples the redox reaction to proton translocation, and thus conserves the redox energy in a proton gradient. This chain is NAD(P)H-quinone oxidoreductase subunit 1, chloroplastic, found in Nasturtium officinale (Watercress).